The primary structure comprises 547 residues: Natural resistance-associated macrophage protein 1 (547 aa).

The disordered stretch occupies residues 1–30 (MTGDKDPQSVSRPNYGSISHPPSSEPQQEP). The Cytoplasmic segment spans residues 1–54 (MTGDKDPQSVSRPNYGSISHPPSSEPQQEPLRTTYLSEKIPIPDTEPGTFSLRK). Residues 8 to 17 (QSVSRPNYGS) show a composition bias toward polar residues. The span at 21–30 (PPSSEPQQEP) shows a compositional bias: low complexity. The helical transmembrane segment at 55-75 (LWAFTGPGFLMSIAFLDPGNI) threads the bilayer. Over 76 to 81 (ESDLQA) the chain is Extracellular. A helical transmembrane segment spans residues 82–102 (GAVAGFKLLWVLLWATVLGLL). Over 103-139 (CQRLAARLGVVTGKDLGEICHLYYPKVPRTLLWLTIE) the chain is Cytoplasmic. The chain crosses the membrane as a helical span at residues 140–160 (LAIVGSDMQEVIGTAIAFSLL). Topologically, residues 161–164 (SAGR) are extracellular. Residues 165-185 (IPLWGGVLITIVDTFFFLFLD) form a helical membrane-spanning segment. The Cytoplasmic segment spans residues 186 to 193 (NYGLRKLE). The helical transmembrane segment at 194 to 214 (AFFGILITIMALTFGYEYVVA) threads the bilayer. At 215–240 (RPAQVALLQGLLLPSCPGCGRPELLQ) the chain is on the extracellular side. Residues 241–261 (AVGIVGAIIMPHNIYLHSALV) traverse the membrane as a helical segment. At 262–286 (KSREIDRSRRPDIREANMYFLIEAS) the chain is on the cytoplasmic side. Residues 287 to 307 (IALSVSFFINLFVVAVFGQAF) traverse the membrane as a helical segment. The Extracellular portion of the chain corresponds to 308 to 346 (YQQTNEAAFNVCANSSLHDYAKIFPRNNLTVEVDIYQGG). N-linked (GlcNAc...) asparagine glycosylation is found at Asn321 and Asn335. A helical membrane pass occupies residues 347–367 (VMLGCVFGPAALYIWAVGLLA). Topologically, residues 368–394 (AGQSSTMTGTYAGQFVMEGFLRLRWSR) are cytoplasmic. Residues 395–415 (FARVLLTRSCAILPTVLVVVF) traverse the membrane as a helical segment. The Extracellular portion of the chain corresponds to 416 to 432 (RDLKDLSGLNDLLNVLQ). The helical transmembrane segment at 433–453 (SLLLPFAVLPILTFTSMPALM) threads the bilayer. Residues 454-464 (QEFANGRLSKA) lie on the Cytoplasmic side of the membrane. Residues 465–485 (ITSFIMALVCAINLYFVVIYL) traverse the membrane as a helical segment. At 486–492 (PSLPHPA) the chain is on the extracellular side. Residues 493–513 (YFILVALLAIVYLGLTTYLVW) form a helical membrane-spanning segment. At 514–547 (TCFIAHGVTLLAHSSHQHFLYGLPDVEEKGKISG) the chain is on the cytoplasmic side.

It belongs to the NRAMP family.

It localises to the late endosome membrane. Its subcellular location is the lysosome membrane. The catalysed reaction is Zn(2+)(in) + H(+)(out) = Zn(2+)(out) + H(+)(in). It carries out the reaction Fe(2+)(in) + H(+)(out) = Fe(2+)(out) + H(+)(in). The enzyme catalyses Mn(2+)(in) + H(+)(out) = Mn(2+)(out) + H(+)(in). Its function is as follows. Macrophage-specific antiporter that fluxes metal ions in either direction against a proton gradient. Localized to late endosomal lysosomal membranes, delivers bivalent cations from the cytosol into these acidic compartments where they may directly affect antimicrobial activity. Involved in iron metabolism and host natural resistance to infection with intracellular parasites. Pathogen resistance involves sequestration of Fe(2+) and Mn(2+), cofactors of both prokaryotic and eukaryotic catalases and superoxide dismutases, not only to protect the macrophage against its own generation of reactive oxygen species, but to deny the cations to the pathogen for synthesis of its protective enzymes. This is Natural resistance-associated macrophage protein 1 (SLC11A1) from Canis lupus familiaris (Dog).